Consider the following 117-residue polypeptide: Large ribosomal subunit protein uL18 (117 aa).

It belongs to the universal ribosomal protein uL18 family. As to quaternary structure, part of the 50S ribosomal subunit; part of the 5S rRNA/L5/L18/L25 subcomplex. Contacts the 5S and 23S rRNAs.

This is one of the proteins that bind and probably mediate the attachment of the 5S RNA into the large ribosomal subunit, where it forms part of the central protuberance. This Aliivibrio fischeri (strain MJ11) (Vibrio fischeri) protein is Large ribosomal subunit protein uL18.